The sequence spans 630 residues: UvrABC system protein C (630 aa).

Positions 18 to 97 (TQSGVYLMKN…IKKHRPKYNI (80 aa)) constitute a GIY-YIG domain. The region spanning 207-242 (KKVIKSMTEKMMGAADEEKFEVAARLRDSIEAIKAI) is the UVR domain.

The protein belongs to the UvrC family. As to quaternary structure, interacts with UvrB in an incision complex.

It is found in the cytoplasm. In terms of biological role, the UvrABC repair system catalyzes the recognition and processing of DNA lesions. UvrC both incises the 5' and 3' sides of the lesion. The N-terminal half is responsible for the 3' incision and the C-terminal half is responsible for the 5' incision. This chain is UvrABC system protein C, found in Bdellovibrio bacteriovorus (strain ATCC 15356 / DSM 50701 / NCIMB 9529 / HD100).